The primary structure comprises 164 residues: Protein CURVATURE THYLAKOID 1A, chloroplastic (164 aa).

A chloroplast-targeting transit peptide spans 1-62; sequence MAISVAASSS…LQKVELLKTR (62 aa). Ala63 bears the N-acetylalanine mark. The Stromal portion of the chain corresponds to 63-93; sequence ASSEETSSIDTNELITDLKEKWDGLENKSTV. The helical transmembrane segment at 94–114 threads the bilayer; that stretch reads LIYGGGAIVAVWLSSIVVGAI. Residues 115 to 116 lie on the Lumenal side of the membrane; sequence NS. The helical transmembrane segment at 117-137 threads the bilayer; the sequence is VPLLPKVMELVGLGYTGWFVY. Residues 138 to 164 lie on the Stromal side of the membrane; the sequence is RYLLFKSSRKELAEDIESLKKKIAGSE. A coiled-coil region spans residues 140–164; that stretch reads LLFKSSRKELAEDIESLKKKIAGSE.

The protein belongs to the CURT family. Homo- and heterodimers and trimers.

The protein localises to the plastid. It localises to the chloroplast. It is found in the plastoglobule. The protein resides in the membrane. Its subcellular location is the chloroplast thylakoid membrane. In terms of biological role, determines thylakoid architecture by inducing membrane curvature. In Arabidopsis thaliana (Mouse-ear cress), this protein is Protein CURVATURE THYLAKOID 1A, chloroplastic (CURT1A).